The chain runs to 1254 residues: Structural polyprotein (1254 aa).

The tract at residues 1 to 33 is necessary for nucleocapsid assembly and virus assembly; it reads MFPYQPMYPMQPMPFRNPFAAPRRPWFPRTDPF. A host transcription inhibition region spans residues 33-68; that stretch reads FLAMQVQELARSMANLTFKQRRDVPPEGPPAKKKKK. The Supraphysiological nuclear export signal motif lies at 41–48; it reads LARSMANL. The interval 48-119 is disordered; the sequence is LTFKQRRDVP…KPGKRQRMVM (72 aa). Residues 64 to 68 carry the Nuclear localization signal motif; sequence KKKKK. 2 stretches are compositionally biased toward basic residues: residues 79-93 and 102-117; these read NGKK…KKKT and GGKK…RQRM. Positions 91 to 126 are binding to the viral RNA; sequence KKTGPPPQKTNGGKKKVNKKPGKRQRMVMKLESDKT. T93 bears the Phosphothreonine mark. The ribosome-binding stretch occupies residues 111–125; that stretch reads PGKRQRMVMKLESDK. S123 is subject to Phosphoserine. Positions 125 to 274 constitute a Peptidase S3 domain; it reads KTFPIMLDGR…KYTPENSEQW (150 aa). T126 carries the post-translational modification Phosphothreonine. Residue H151 is the Charge relay system of the active site. The interaction with spike glycoprotein E2 stretch occupies residues 167–172; the sequence is KKASKY. Catalysis depends on charge relay system residues D173 and S225. Residues 259-263 form an interaction with spike glycoprotein E2 region; sequence EKGVT. A functions as an uncleaved signal peptide for the precursor of protein E3/E2 region spans residues 275–286; it reads SLVTTMCLLANV. Residues 275-700 are Extracellular-facing; that stretch reads SLVTTMCLLA…HYYHRYPMST (426 aa). Disulfide bonds link C281-C290, C352-C456, C355-C360, C423-C437, C484-C599, C533-C559, and C535-C553. N285 carries N-linked (GlcNAc...) asparagine; by host glycosylation. N651 carries N-linked (GlcNAc...) asparagine; by host glycosylation. A helical transmembrane segment spans residues 701–721; that stretch reads ILGLSICAAIVTTSIAASVWL. Residues 722 to 756 are Cytoplasmic-facing; the sequence is FCKSRISCLTPYRLTPNARMPLCLAVLCCARTARA. The segment at 724 to 728 is interaction with the capsid protein; the sequence is KSRIS. 3 S-palmitoyl cysteine; by host lipidation sites follow: C729, C749, and C750. Positions 729–749 are transient transmembrane before p62-6K protein processing; that stretch reads CLTPYRLTPNARMPLCLAVLC. C729 and C750 form a disulfide bridge. Over 757–771 the chain is Extracellular; that stretch reads ETTWESLDHLWNHNQ. 2 consecutive transmembrane segments (helical) span residues 772 to 790 and 791 to 811; these read QMFW…VATR and LLKC…VGAG. Over 812 to 1224 the chain is Extracellular; sequence AYEHATTMPN…SKTAWTWLTS (413 aa). Cystine bridges form between C861-C926, C874-C906, C875-C908, and C880-C890. Residues 896–913 form an E1 fusion peptide loop region; it reads VYPFMWGGAYCFCDTENT. 2 N-linked (GlcNAc...) asparagine; by host glycosylation sites follow: N946 and N1082. 4 disulfides stabilise this stretch: C1071–C1083, C1113–C1188, C1118–C1192, and C1140–C1182. Residues 1225 to 1245 traverse the membrane as a helical segment; that stretch reads LLGGSAIIIIIGLVLATIVAM. Over 1246-1254 the chain is Cytoplasmic; sequence YVLTNQKHN.

In terms of assembly, homodimer. Homomultimer. Interacts with host karyopherin KPNA4; this interaction allows the nuclear import of the viral capsid protein. Interacts with spike glycoprotein E2. Interacts with host IRAK1; the interaction leads to inhibition of IRAK1-dependent signaling. Part of a tetrameric complex composed of host CRM1, host importin alpha/beta dimer and the viral capsid; this complex blocks the receptor-mediated transport through the nuclear pore. Interacts with host phosphatase PPP1CA; this interaction dephosphorylates the capsid protein, which increases its ability to bind to the viral genome. As to quaternary structure, the precursor of protein E3/E2 and E1 form a heterodimer shortly after synthesis. Interacts with spike glycoprotein E2. The precursor of protein E3/E2 and E1 form a heterodimer shortly after synthesis. Processing of the precursor of protein E3/E2 into E2 and E3 results in a heterodimer of the spike glycoproteins E2 and E1. Spike at virion surface are constituted of three E2-E1 heterodimers. After target cell attachment and endocytosis, E1 change conformation to form homotrimers. Interacts with 6K protein. Interacts with host LDLRAD3; this interaction mediates viral entry to the host cell. In terms of assembly, interacts with spike glycoprotein E1. Processing of the precursor of protein E3/E2 into E2 and E3 results in a heterodimer of the spike glycoproteins E2 and E1. Spike at virion surface are constituted of a trimer of E2-E1 heterodimers. Interacts with 6K protein. Interacts with host LDLRAD3; this interaction mediates viral entry to the host cell. As to quaternary structure, oligomer. Interacts with spike glycoprotein E1. Interacts with spike glycoprotein E2. In terms of processing, structural polyprotein: Specific enzymatic cleavages in vivo yield mature proteins. Capsid protein is auto-cleaved during polyprotein translation, unmasking a signal peptide at the N-terminus of the precursor of E3/E2. The remaining polyprotein is then targeted to the host endoplasmic reticulum, where host signal peptidase cleaves it into pE2, 6K and E1 proteins. pE2 is further processed to mature E3 and E2 by host furin in trans-Golgi vesicle. Phosphorylated on serine and threonine residues. Post-translationally, palmitoylated via thioester bonds. These palmitoylations may induce disruption of the C-terminus transmembrane. This would result in the reorientation of E2 C-terminus from lumenal to cytoplasmic side. In terms of processing, N-glycosylated. Palmitoylated via thioester bonds.

It is found in the virion. It localises to the host cytoplasm. The protein localises to the host cell membrane. Its subcellular location is the host nucleus. The protein resides in the virion membrane. It is found in the host Golgi apparatus. It localises to the host trans-Golgi network. The protein localises to the host endoplasmic reticulum. The catalysed reaction is Autocatalytic release of the core protein from the N-terminus of the togavirus structural polyprotein by hydrolysis of a -Trp-|-Ser- bond.. In terms of biological role, forms an icosahedral capsid with a T=4 symmetry composed of 240 copies of the capsid protein surrounded by a lipid membrane through which penetrate 80 spikes composed of trimers of E1-E2 heterodimers. The capsid protein binds to the viral RNA genome at a site adjacent to a ribosome binding site for viral genome translation following genome release. Possesses a protease activity that results in its autocatalytic cleavage from the nascent structural protein. Following its self-cleavage, the capsid protein transiently associates with ribosomes, and within several minutes the protein binds to viral RNA and rapidly assembles into icosahedric core particles. The resulting nucleocapsid eventually associates with the cytoplasmic domain of the spike glycoprotein E2 at the cell membrane, leading to budding and formation of mature virions. In case of infection, new virions attach to target cells and after clathrin-mediated endocytosis their membrane fuses with the host endosomal membrane. This leads to the release of the nucleocapsid into the cytoplasm, followed by an uncoating event necessary for the genomic RNA to become accessible. The uncoating might be triggered by the interaction of capsid proteins with ribosomes. Binding of ribosomes would release the genomic RNA since the same region is genomic RNA-binding and ribosome-binding. Specifically inhibits interleukin-1 receptor-associated kinase 1/IRAK1-dependent signaling during viral entry, representing a means by which the alphaviruses may evade innate immune detection and activation prior to viral gene expression. Inhibits host transcription. Forms a tetrameric complex with XPO1/CRM1 and the nuclear import receptor importin. This complex blocks the central channel of host nuclear pores thereby inhibiting the receptor-mediated nuclear transport and thus the host mRNA and rRNA transcription. The inhibition of transcription is linked to a cytopathic effect on the host cell. Functionally, provides the signal sequence for the translocation of the precursor of protein E3/E2 to the host endoplasmic reticulum. Furin-cleaved E3 remains associated with spike glycoprotein E1 and mediates pH protection of the latter during the transport via the secretory pathway. After virion release from the host cell, the assembly protein E3 is gradually released in the extracellular space. Plays a role in viral attachment to target host cell, by binding to the cell receptor LDLRAD3. Synthesized as a p62 precursor which is processed by furin at the cell membrane just before virion budding, giving rise to E2-E1 heterodimer. The p62-E1 heterodimer is stable, whereas E2-E1 is unstable and dissociate at low pH. p62 is processed at the last step, presumably to avoid E1 fusion activation before its final export to cell surface. E2 C-terminus contains a transitory transmembrane that would be disrupted by palmitoylation, resulting in reorientation of the C-terminal tail from lumenal to cytoplasmic side. This step is critical since E2 C-terminus is involved in budding by interacting with capsid proteins. This release of E2 C-terminus in cytoplasm occurs lately in protein export, and precludes premature assembly of particles at the endoplasmic reticulum membrane. Its function is as follows. Acts as a viroporin that participates in virus glycoprotein processing and transport to the plasma membrane, cell permeabilization and budding of viral particles. Disrupts the calcium homeostasis of the cell, probably at the endoplasmic reticulum level. This leads to cytoplasmic calcium elevation. Because of its lipophilic properties, the 6K protein is postulated to influence the selection of lipids that interact with the transmembrane domains of the glycoproteins, which, in turn, affects the deformability of the bilayer required for the extreme curvature that occurs as budding proceeds. Present in low amount in virions, about 3% compared to viral glycoproteins. In terms of biological role, class II viral fusion protein. Fusion activity is inactive as long as E1 is bound to E2 in mature virion. After virus attachment to cell receptor LDLRAD3 and endocytosis, acidification of the endosome induce dissociation of E1/E2 heterodimer and concomitant trimerization of the E1 subunits. This E1 trimer is fusion active, and promotes release of viral nucleocapsid in cytoplasm after endosome and viral membrane fusion. Efficient fusion requires the presence of cholesterol and sphingolipid in the target membrane. The sequence is that of Structural polyprotein from Venezuelan equine encephalitis virus (strain Mena II) (VEEV).